Consider the following 597-residue polypeptide: Polyphenol oxidase latent form, chloroplastic (597 aa).

Residues 1–49 (MATAPSPTTMGTYSSLISTNSFSTFLPNKSQLSLSGKSKHYVARRSSIS) constitute a chloroplast transit peptide. Residues 49–70 (SCKATNNNNSNNQNEQQEESSR) are disordered. Residues 50–101 (CKATNNNNSNNQNEQQEESSRLLGKLDRRNILIGLGGLYGATTLDRKPFAFA) constitute a thylakoid transit peptide. Residues 54–63 (NNNNSNNQNE) are compositionally biased toward low complexity. 2 disulfide bridges follow: Cys112-Cys128 and Cys127-Cys189. Residues His188, His209, His218, His341, His345, and His375 each coordinate Cu cation. The segment at residues 192-209 (CNGAYPQVGFTDNDIQVH) is a cross-link (2'-(S-cysteinyl)-histidine (Cys-His)).

The protein belongs to the tyrosinase family. As to quaternary structure, monomer. It depends on Cu(2+) as a cofactor. In terms of tissue distribution, expressed in immature-green fruit.

The protein localises to the plastid. The protein resides in the chloroplast thylakoid lumen. The catalysed reaction is 2 catechol + O2 = 2 1,2-benzoquinone + 2 H2O. With respect to regulation, activated in the presence of substrate at low pH. Specific activity fluctuates during fruit ripening, starting at immature-green stage, reaching a peak at the breaker stage, followed by a sharp decrease until the half-ripe stage to remain stable during the following development stages. Triggered by CuSO(4) and by low concentrations of SDS. Repressed by several inhibitors including 4-hexylresorcinol, ascorbic acid, benzoic acid, kojic acid, glutathione (reduced form), L-cysteine and sodium metabisulfite. Inhibited by various salt such as FeSO(4), KCl, NaCl, CaCl(2), MnCl(2), NiCl(2) and AlCl(3). Spontaneously activated during storage at 4 degrees Celsius. Functionally, catalyzes the oxidation of mono- and o-diphenols to o-diquinones. Uses preferentially 4-methylcatechol and chlorogenic acid as substrates, followed by caffeic acid, pyrogallol, and catechol, but barely active toward dopamine and L-dopa. No activity detected with monophenols (e.g. phenol and tyramine). The protein is Polyphenol oxidase latent form, chloroplastic of Prunus armeniaca (Apricot).